The sequence spans 96 residues: UPF0235 protein Shewmr4_1190 (96 aa).

This sequence belongs to the UPF0235 family.

In Shewanella sp. (strain MR-4), this protein is UPF0235 protein Shewmr4_1190.